A 101-amino-acid polypeptide reads, in one-letter code: Replication restart protein PriB (101 aa).

An SSB domain is found at 1 to 101; the sequence is MATNHLVLSG…LHAENVELKT (101 aa).

This sequence belongs to the PriB family. As to quaternary structure, homodimer. Interacts with PriA and DnaT. Component of the replication restart primosome. Primosome assembly occurs via a 'hand-off' mechanism. PriA binds to replication forks, subsequently PriB then DnaT bind; DnaT then displaces ssDNA to generate the helicase loading substrate.

Its function is as follows. Involved in the restart of stalled replication forks, which reloads the replicative helicase on sites other than the origin of replication; the PriA-PriB pathway is the major replication restart pathway. During primosome assembly it facilitates complex formation between PriA and DnaT on DNA; stabilizes PriA on DNA. Stimulates the DNA unwinding activity of PriA helicase. This Shewanella sediminis (strain HAW-EB3) protein is Replication restart protein PriB.